Consider the following 167-residue polypeptide: Transcriptional regulator MraZ (167 aa).

2 consecutive SpoVT-AbrB domains span residues 8 to 51 (ESHH…YGDH) and 92 to 135 (SLPT…KPET).

Belongs to the MraZ family. As to quaternary structure, forms oligomers.

It localises to the cytoplasm. Its subcellular location is the nucleoid. This Ruegeria sp. (strain TM1040) (Silicibacter sp.) protein is Transcriptional regulator MraZ.